We begin with the raw amino-acid sequence, 303 residues long: Phosphate import ATP-binding protein PstB (303 aa).

An ABC transporter domain is found at 56-298 (LSTSDVHVYY…PDHQLTEAYI (243 aa)). An ATP-binding site is contributed by 88–95 (GPSGCGKS).

This sequence belongs to the ABC transporter superfamily. Phosphate importer (TC 3.A.1.7) family. The complex is composed of two ATP-binding proteins (PstB), two transmembrane proteins (PstC and PstA) and a solute-binding protein (PstS).

The protein localises to the cell inner membrane. It catalyses the reaction phosphate(out) + ATP + H2O = ADP + 2 phosphate(in) + H(+). Part of the ABC transporter complex PstSACB involved in phosphate import. Responsible for energy coupling to the transport system. The sequence is that of Phosphate import ATP-binding protein PstB from Acinetobacter baylyi (strain ATCC 33305 / BD413 / ADP1).